Consider the following 226-residue polypeptide: ATP synthase subunit a (226 aa).

Transmembrane regions (helical) follow at residues 17–37 (FSYFFHIGLVALIAVIVAMMA), 79–99 (LVATLGIIVFFSNIIGIIPGF), 105–125 (SLNLTLSLAIIVFVYYHFEGI), 134–154 (FAHFMGPIKLLAPLMFPIEIV), 176–196 (LFLMVILALVPYIAPLPAYVL), and 199–219 (FMAFLQAFIFMILTYVYLAGA).

It belongs to the ATPase A chain family. As to quaternary structure, F-type ATPases have 2 components, CF(1) - the catalytic core - and CF(0) - the membrane proton channel. CF(1) has five subunits: alpha(3), beta(3), gamma(1), delta(1), epsilon(1). CF(0) has three main subunits: a(1), b(2) and c(9-12). The alpha and beta chains form an alternating ring which encloses part of the gamma chain. CF(1) is attached to CF(0) by a central stalk formed by the gamma and epsilon chains, while a peripheral stalk is formed by the delta and b chains.

The protein resides in the cell inner membrane. Its function is as follows. Key component of the proton channel; it plays a direct role in the translocation of protons across the membrane. The polypeptide is ATP synthase subunit a (Campylobacter jejuni subsp. jejuni serotype O:6 (strain 81116 / NCTC 11828)).